Consider the following 456-residue polypeptide: NADPH-ferredoxin reductase FprA (456 aa).

FAD is bound by residues serine 17, glutamate 43, leucine 51, and valine 87. NADP(+) contacts are provided by residues arginine 113, 158–161 (NGNV), 202–203 (RR), and glutamate 214. FAD-binding positions include tryptophan 362 and 369-371 (GVI). Glycine 369 serves as a coordination point for NADP(+).

This sequence belongs to the ferredoxin--NADP reductase type 1 family. As to quaternary structure, monomer. It depends on FAD as a cofactor.

It carries out the reaction 2 reduced [2Fe-2S]-[ferredoxin] + NADP(+) + H(+) = 2 oxidized [2Fe-2S]-[ferredoxin] + NADPH. May serve as electron transfer protein and supply electrons to P450 systems. The sequence is that of NADPH-ferredoxin reductase FprA (fprA) from Mycobacterium leprae (strain TN).